A 510-amino-acid chain; its full sequence is Inositol-3-phosphate synthase (510 aa).

24 residues coordinate NAD(+): G70, G71, N72, N73, D143, I180, Q190, R193, T230, A231, N232, T233, G281, S282, D306, S309, N340, N341, D342, K355, G393, D394, D422, and S423.

It belongs to the myo-inositol 1-phosphate synthase family. NAD(+) is required as a cofactor.

The protein resides in the cytoplasm. It is found in the cytosol. The protein localises to the nucleus. It carries out the reaction D-glucose 6-phosphate = 1D-myo-inositol 3-phosphate. Its pathway is polyol metabolism; myo-inositol biosynthesis; myo-inositol from D-glucose 6-phosphate: step 1/2. Its function is as follows. Key enzyme in myo-inositol biosynthesis pathway that catalyzes the conversion of glucose 6-phosphate to 1-myo-inositol 1-phosphate in a NAD-dependent manner. This is Inositol-3-phosphate synthase (INPS1) from Nicotiana paniculata.